A 508-amino-acid polypeptide reads, in one-letter code: Glycerol kinase (508 aa).

Threonine 14 is a binding site for ADP. ATP contacts are provided by threonine 14, threonine 15, and serine 16. Sn-glycerol 3-phosphate is bound at residue threonine 14. Arginine 18 serves as a coordination point for ADP. The sn-glycerol 3-phosphate site is built by arginine 84, glutamate 85, and tyrosine 136. Residues arginine 84, glutamate 85, and tyrosine 136 each coordinate glycerol. Histidine 232 carries the post-translational modification Phosphohistidine; by HPr. Aspartate 246 provides a ligand contact to sn-glycerol 3-phosphate. Glycerol-binding residues include aspartate 246 and glutamine 247. Threonine 268 and glycine 311 together coordinate ADP. 4 residues coordinate ATP: threonine 268, glycine 311, glutamine 315, and glycine 412. Residues glycine 412 and asparagine 416 each coordinate ADP.

This sequence belongs to the FGGY kinase family. As to quaternary structure, homotetramer and homodimer (in equilibrium). The phosphoenolpyruvate-dependent sugar phosphotransferase system (PTS), including enzyme I, and histidine-containing protein (HPr) are required for the phosphorylation, which leads to the activation of the enzyme.

The catalysed reaction is glycerol + ATP = sn-glycerol 3-phosphate + ADP + H(+). It participates in polyol metabolism; glycerol degradation via glycerol kinase pathway; sn-glycerol 3-phosphate from glycerol: step 1/1. With respect to regulation, activated by phosphorylation and inhibited by fructose 1,6-bisphosphate (FBP). Key enzyme in the regulation of glycerol uptake and metabolism. Catalyzes the phosphorylation of glycerol to yield sn-glycerol 3-phosphate. The chain is Glycerol kinase from Streptococcus pyogenes serotype M3 (strain ATCC BAA-595 / MGAS315).